A 235-amino-acid chain; its full sequence is Small ribosomal subunit protein uS2 (235 aa).

This sequence belongs to the universal ribosomal protein uS2 family.

The polypeptide is Small ribosomal subunit protein uS2 (Thermoanaerobacter sp. (strain X514)).